A 572-amino-acid polypeptide reads, in one-letter code: Urease subunit alpha (572 aa).

The region spanning 136 to 572 is the Urease domain; it reads GGIDTHIHFI…VPLGQRYFLF (437 aa). 3 residues coordinate Ni(2+): H141, H143, and K224. K224 is modified (N6-carboxylysine). A substrate-binding site is contributed by H226. Residues H253 and H279 each coordinate Ni(2+). Catalysis depends on H327, which acts as the Proton donor. D367 contacts Ni(2+).

The protein belongs to the metallo-dependent hydrolases superfamily. Urease alpha subunit family. In terms of assembly, heterotrimer of UreA (gamma), UreB (beta) and UreC (alpha) subunits. Three heterotrimers associate to form the active enzyme. Ni cation serves as cofactor. In terms of processing, carboxylation allows a single lysine to coordinate two nickel ions.

The protein localises to the cytoplasm. It carries out the reaction urea + 2 H2O + H(+) = hydrogencarbonate + 2 NH4(+). The protein operates within nitrogen metabolism; urea degradation; CO(2) and NH(3) from urea (urease route): step 1/1. This Haemophilus influenzae (strain ATCC 51907 / DSM 11121 / KW20 / Rd) protein is Urease subunit alpha.